The sequence spans 248 residues: 1-(5-phosphoribosyl)-5-[(5-phosphoribosylamino)methylideneamino] imidazole-4-carboxamide isomerase (248 aa).

The active-site Proton acceptor is Asp-7. The active-site Proton donor is the Asp-129.

Belongs to the HisA/HisF family.

Its subcellular location is the cytoplasm. The enzyme catalyses 1-(5-phospho-beta-D-ribosyl)-5-[(5-phospho-beta-D-ribosylamino)methylideneamino]imidazole-4-carboxamide = 5-[(5-phospho-1-deoxy-D-ribulos-1-ylimino)methylamino]-1-(5-phospho-beta-D-ribosyl)imidazole-4-carboxamide. The protein operates within amino-acid biosynthesis; L-histidine biosynthesis; L-histidine from 5-phospho-alpha-D-ribose 1-diphosphate: step 4/9. The chain is 1-(5-phosphoribosyl)-5-[(5-phosphoribosylamino)methylideneamino] imidazole-4-carboxamide isomerase from Aeromonas salmonicida (strain A449).